The following is an 86-amino-acid chain: Weak neurotoxin 9 (86 aa).

Positions M1–T21 are cleaved as a signal peptide. 5 disulfides stabilise this stretch: C24–C45, C27–C32, C38–C63, C67–C78, and C79–C84.

Belongs to the three-finger toxin family. Ancestral subfamily. Orphan group II sub-subfamily. In terms of tissue distribution, expressed by the venom gland.

The protein localises to the secreted. In terms of biological role, binds with low affinity to muscular (alpha-1-beta-1-delta-epsilon/CHRNA1-CHRNB1-CHRND-CHRNE) and very low affinity to neuronal (alpha-7/CHRNA7) nicotinic acetylcholine receptor (nAChR). This Naja sputatrix (Malayan spitting cobra) protein is Weak neurotoxin 9.